A 203-amino-acid polypeptide reads, in one-letter code: Urease accessory protein UreG (203 aa).

Residue 14-21 (GPVGSGKT) coordinates GTP.

It belongs to the SIMIBI class G3E GTPase family. UreG subfamily. As to quaternary structure, homodimer. UreD, UreF and UreG form a complex that acts as a GTP-hydrolysis-dependent molecular chaperone, activating the urease apoprotein by helping to assemble the nickel containing metallocenter of UreC. The UreE protein probably delivers the nickel.

The protein localises to the cytoplasm. In terms of biological role, facilitates the functional incorporation of the urease nickel metallocenter. This process requires GTP hydrolysis, probably effectuated by UreG. This chain is Urease accessory protein UreG, found in Sinorhizobium fredii (strain NBRC 101917 / NGR234).